Reading from the N-terminus, the 352-residue chain is Protein-glutamate methylesterase/protein-glutamine glutaminase (352 aa).

Positions 4-121 (RVLIVDDSAT…YDGIDEIQKE (118 aa)) constitute a Response regulatory domain. Aspartate 55 carries the post-translational modification 4-aspartylphosphate. The 193-residue stretch at 159 to 351 (AQTTNKLIAI…VKIASLLSER (193 aa)) folds into the CheB-type methylesterase domain. Active-site residues include serine 171, histidine 197, and aspartate 293.

Belongs to the CheB family. Post-translationally, phosphorylated by CheA. Phosphorylation of the N-terminal regulatory domain activates the methylesterase activity.

It is found in the cytoplasm. The catalysed reaction is [protein]-L-glutamate 5-O-methyl ester + H2O = L-glutamyl-[protein] + methanol + H(+). It catalyses the reaction L-glutaminyl-[protein] + H2O = L-glutamyl-[protein] + NH4(+). Functionally, involved in chemotaxis. Part of a chemotaxis signal transduction system that modulates chemotaxis in response to various stimuli. Catalyzes the demethylation of specific methylglutamate residues introduced into the chemoreceptors (methyl-accepting chemotaxis proteins or MCP) by CheR. Also mediates the irreversible deamidation of specific glutamine residues to glutamic acid. The protein is Protein-glutamate methylesterase/protein-glutamine glutaminase of Sulfurimonas denitrificans (strain ATCC 33889 / DSM 1251) (Thiomicrospira denitrificans (strain ATCC 33889 / DSM 1251)).